The sequence spans 320 residues: Quinolinate synthase (320 aa).

Histidine 34 and serine 51 together coordinate iminosuccinate. Cysteine 96 provides a ligand contact to [4Fe-4S] cluster. Residues tyrosine 122 to asparagine 124 and serine 139 each bind iminosuccinate. Cysteine 182 serves as a coordination point for [4Fe-4S] cluster. Iminosuccinate-binding positions include histidine 208–glutamate 210 and threonine 225. Residue cysteine 276 participates in [4Fe-4S] cluster binding.

It belongs to the quinolinate synthase family. Type 2 subfamily. [4Fe-4S] cluster serves as cofactor.

Its subcellular location is the cytoplasm. The enzyme catalyses iminosuccinate + dihydroxyacetone phosphate = quinolinate + phosphate + 2 H2O + H(+). The protein operates within cofactor biosynthesis; NAD(+) biosynthesis; quinolinate from iminoaspartate: step 1/1. In terms of biological role, catalyzes the condensation of iminoaspartate with dihydroxyacetone phosphate to form quinolinate. This Synechococcus sp. (strain ATCC 27144 / PCC 6301 / SAUG 1402/1) (Anacystis nidulans) protein is Quinolinate synthase.